A 58-amino-acid chain; its full sequence is Potassium channel toxin Ts16 (58 aa).

An N-terminal signal peptide occupies residues 1 to 16 (MHSSVFILILFSLAVI). Intrachain disulfides connect Cys-29–Cys-51, Cys-34–Cys-47, and Cys-38–Cys-53.

As to expression, expressed by the venom gland.

The protein resides in the secreted. Its function is as follows. Blocks potassium channels. This Tityus serrulatus (Brazilian scorpion) protein is Potassium channel toxin Ts16.